The sequence spans 1022 residues: MSKDGNLDTSEFDPLANKEYTEEQKQTLEQEQKEFLSQTTTPALEADDGFIVTSASFAQSTPSMSALSGNISPDSQTSDPITKAVRETIIQPQKDNLIEQILKDLAALTDRDLAEQKRKEIEEEKEKDKTLSTFFGNPANREFIDKALENPELKKKLESIEIAGYKNVHNTFSAASGYPGGFKPVQWENHVSANDLRATVVKNDAGDELCTLNETTVKTKPFTLAKQDGTQVQISSYREIDFPIKLDKADGSMHLSMVALKADGTKPSKDKAVYFTAHYEEGPNGKPQLKEISSPKPLKFAGTGDDAIAYIEHGGEIYTLAVTRGKYKEMMKEVELNQGQSVDLSQAEDIIIGQGQSKEQPLITPQQTTSSSVEPPQYKQQVPPITPTNQPLQPETSQMPQSQQVNPNLLNTATALSGSMQDLLNYVNAGLTKAIDSNKQIDLIKEAATAILNNEKSDIAEKQANIIALAENTVNNKNLKPDAKVTGVNAVLETIKNDQNTPNLEKSKMLEATVAIVLNSENLEPKQKQQMLEKAVDVGLSLKDDASRAAAIDGIKDVVIKSNLSPEDKMLIAVGDKVNVSELSNAEKQKLLGSVLKKGVEAQVLSPAQQQLMQQHLYKIMAEQTKKDTIKKVNDILFDPLSNTELKTTNIQAITSNVLDGPATAEVKGEIIQAITNTIAGSSLEAQDKAAIIKGVGETIATHSDTSLSLPNKALIMASAEKGIAESQTNLPDRELMTKGLVDGIYEGKGGPEITKAVSSGIDNSNINDSEKEALKKAKDAASEAALDRDTQNLTEGFKGQNIEEHKPHDDIYNKAREVINAVNPVIEALEKSKEPVVSAEERIVQETSSILNNISKLAVEKVNNFRAMLSPNGNLKTLEEKKEEAIKKVDELVKAFGTKSSTEEQQSFIKTNLIDDKTLSKEVRLQTIDKLLQEQKRSEAIENPSVKTEDVRVVSGKSKLKPISKDNPDIEKAKMVVGRDRVNIKGNIKIMGALMNARDIIQSENLNKSTPIKRESSPPQR.

2 disordered regions span residues 1–41 and 355–403; these read MSKD…QTTT and GQSK…PQSQ. The segment covering 19–34 has biased composition (basic and acidic residues); the sequence is EYTEEQKQTLEQEQKE. Polar residues-rich tracts occupy residues 355-380 and 387-403; these read GQSK…QYKQ and PTNQ…PQSQ.

The protein localises to the cytoplasm. In Rickettsia conorii (strain ATCC VR-613 / Malish 7), this protein is Antigenic heat-stable 120 kDa protein (sca4).